The following is a 340-amino-acid chain: Glycerol-3-phosphate dehydrogenase [NAD(P)+] (340 aa).

Residues Ser-14, Phe-15, Arg-35, and Lys-109 each coordinate NADPH. Sn-glycerol 3-phosphate-binding residues include Lys-109 and Gly-137. Ala-141 is an NADPH binding site. Positions 192, 245, 255, 256, and 257 each coordinate sn-glycerol 3-phosphate. The active-site Proton acceptor is Lys-192. Residue Arg-256 coordinates NADPH. NADPH is bound by residues Val-280 and Glu-282.

It belongs to the NAD-dependent glycerol-3-phosphate dehydrogenase family.

It localises to the cytoplasm. The catalysed reaction is sn-glycerol 3-phosphate + NAD(+) = dihydroxyacetone phosphate + NADH + H(+). It catalyses the reaction sn-glycerol 3-phosphate + NADP(+) = dihydroxyacetone phosphate + NADPH + H(+). It participates in membrane lipid metabolism; glycerophospholipid metabolism. Functionally, catalyzes the reduction of the glycolytic intermediate dihydroxyacetone phosphate (DHAP) to sn-glycerol 3-phosphate (G3P), the key precursor for phospholipid synthesis. The protein is Glycerol-3-phosphate dehydrogenase [NAD(P)+] of Teredinibacter turnerae (strain ATCC 39867 / T7901).